Here is a 365-residue protein sequence, read N- to C-terminus: Peptide chain release factor 2 (365 aa).

Gln251 carries the N5-methylglutamine modification.

Belongs to the prokaryotic/mitochondrial release factor family. Post-translationally, methylated by PrmC. Methylation increases the termination efficiency of RF2.

It localises to the cytoplasm. Peptide chain release factor 2 directs the termination of translation in response to the peptide chain termination codons UGA and UAA. The chain is Peptide chain release factor 2 from Campylobacter jejuni (strain RM1221).